Consider the following 361-residue polypeptide: tRNA-specific 2-thiouridylase MnmA (361 aa).

ATP is bound by residues 10–17 (GMSGGVDS) and Met-36. Catalysis depends on Cys-104, which acts as the Nucleophile. Cys-104 and Cys-202 are oxidised to a cystine. Gly-128 is an ATP binding site. The interval 152-154 (KDQ) is interaction with tRNA. Residue Cys-202 is the Cysteine persulfide intermediate of the active site. The tract at residues 308–309 (RY) is interaction with tRNA.

This sequence belongs to the MnmA/TRMU family.

It is found in the cytoplasm. The enzyme catalyses S-sulfanyl-L-cysteinyl-[protein] + uridine(34) in tRNA + AH2 + ATP = 2-thiouridine(34) in tRNA + L-cysteinyl-[protein] + A + AMP + diphosphate + H(+). Its function is as follows. Catalyzes the 2-thiolation of uridine at the wobble position (U34) of tRNA, leading to the formation of s(2)U34. This chain is tRNA-specific 2-thiouridylase MnmA, found in Clostridioides difficile (strain 630) (Peptoclostridium difficile).